The chain runs to 634 residues: (-)-limonene synthase, chloroplastic (634 aa).

The N-terminal 21 residues, 1 to 21 (MSPVSAIPLAYKLCLPRSLIS), are a transit peptide targeting the chloroplast. Residues R348, D385, D389, R526, and G529 each coordinate (2E)-geranyl diphosphate. 2 residues coordinate Mg(2+): D385 and D389. Positions 385-389 (DDIYD) match the DDXXD motif motif. Positions 529 and 537 each coordinate Mg(2+).

This sequence belongs to the terpene synthase family. Tpsb subfamily. Monomer. Mg(2+) serves as cofactor. It depends on Mn(2+) as a cofactor.

Its subcellular location is the plastid. It localises to the chloroplast. It carries out the reaction (2E)-geranyl diphosphate = (4S)-limonene + diphosphate. It participates in secondary metabolite biosynthesis; terpenoid biosynthesis. It functions in the pathway terpene metabolism; oleoresin biosynthesis. Monoterpene synthase (mono-TPS) involved in the biosynthesis of monoterpene natural products. Catalyzes the conversion of (2E)-geranyl diphosphate (GPP) into (-)-limonene. Not able to use geranylgeranyl pyrophosphate (GGPP) and farnesyl pyrophosphate (FPP) as substrates. This chain is (-)-limonene synthase, chloroplastic, found in Picea sitchensis (Sitka spruce).